The sequence spans 90 residues: Small ribosomal subunit protein bS16 (90 aa).

Belongs to the bacterial ribosomal protein bS16 family.

The chain is Small ribosomal subunit protein bS16 from Fervidobacterium nodosum (strain ATCC 35602 / DSM 5306 / Rt17-B1).